The sequence spans 970 residues: Polycystin-2 (970 aa).

A compositionally biased stretch (polar residues) spans 1-11 (MVNSSRVQPQQ). The disordered stretch occupies residues 1–182 (MVNSSRVQPQ…GDPLHRHLPL (182 aa)). Residues 1–221 (MVNSSRVQPQ…STDREKYLKS (221 aa)) lie on the Cytoplasmic side of the membrane. Residues 25-45 (GPGRLMAGGAIAGAGLAAPGG) show a composition bias toward low complexity. The span at 47–60 (REQRGLEIEMERIR) shows a compositional bias: basic and acidic residues. Residues 62 to 83 (AAARDPPAGASASPSPPLSSCS) show a composition bias toward low complexity. 2 positions are modified to phosphoserine: serine 76 and serine 80. The segment covering 95–109 (EAEEEEEEEEVEGEE) has biased composition (acidic residues). Residues 125-138 (RRSASSSAVSSAGA) show a composition bias toward low complexity. Arginine 139 carries the omega-N-methylarginine modification. A compositionally biased stretch (gly residues) spans 139–148 (RGRGLGGYHG). A helical membrane pass occupies residues 222–243 (VLRELATYLLFLIVLCILTYGM). Residues 244-470 (MSSSVYYYTR…PVKLIRYVTT (227 aa)) are Extracellular-facing. N-linked (GlcNAc...) asparagine glycans are attached at residues asparagine 301, asparagine 307, and asparagine 330. The cysteines at positions 333 and 346 are disulfide-linked. 2 N-linked (GlcNAc...) asparagine glycosylation sites follow: asparagine 364 and asparagine 377. The helical transmembrane segment at 471-491 (FDFFLAACEIIFCLFILYYVV) threads the bilayer. Topologically, residues 492-507 (EEILEIRIHKLHYFRS) are cytoplasmic. Residues 508-528 (FWNCLDVVIIVLSVVAIGINI) form a helical membrane-spanning segment. The Extracellular portion of the chain corresponds to 529–554 (YRTSNVEALLQFLEDQNTFPNFENLA). A helical transmembrane segment spans residues 555–575 (YWQTQFNNIAAVIVFFVWIKL). Cholesterol is bound at residue glutamine 559. The Cytoplasmic portion of the chain corresponds to 576-599 (FKFINFNRTMSQLSTTMSRCAKDL). The helical transmembrane segment at 600–621 (FGFAIMFFIIFLAYAQLAYLVF) threads the bilayer. The Extracellular portion of the chain corresponds to 622-633 (GTQVDDFSTFQE). Positions 634-648 (CIFTQFRIILGDINF) form an intramembrane region, pore-forming. Residue leucine 643 coordinates Ca(2+). A Selectivity filter motif is present at residues 643 to 645 (LGD). The Extracellular portion of the chain corresponds to 649 to 656 (AEIEEANR). Residues 657 to 677 (VLGPIYFTTFVFFMFFILLNM) form a helical membrane-spanning segment. The Cytoplasmic portion of the chain corresponds to 678–970 (FLAIINDTYS…GGNGSANIHV (293 aa)). In terms of domain architecture, EF-hand spans 750–785 (KGHTDAEIEAIFTKYDQDGDQELTEHEHQQMRDDLE). Ca(2+)-binding residues include aspartate 765, aspartate 767, aspartate 769, glutamate 771, and glutamate 776. The disordered stretch occupies residues 766 to 833 (QDGDQELTEH…HSSRRRGSIS (68 aa)). The segment covering 772–797 (LTEHEHQQMRDDLEKEREDLDLDHSS) has biased composition (basic and acidic residues). Residues 798 to 809 (LPRPMSSRSFPR) show a composition bias toward low complexity. Residues serine 803, serine 810, serine 814, and serine 831 each carry the phosphoserine modification. A linker region spans residues 805 to 824 (RSFPRSLDDSEEEDDDDSGH). The important for interaction with PACS1 and PACS2 stretch occupies residues 812–823 (DDSEEEDDDDSG). Positions 835–874 (GVSYEEFQVLVRRVDRMEHSIGSIVSKIDAVIVKLEIMER) form a coiled coil. A disordered region spans residues 921 to 970 (DDAASQISHGLGTPLGLNGQPRPRSSRPSSSQSTEGMEGGGGNGSANIHV). The segment covering 940 to 956 (QPRPRSSRPSSSQSTEG) has biased composition (low complexity).

It belongs to the polycystin family. In terms of assembly, homotetramer. Component of the heterotetrameric polycystin channel complex with PKD1; the tetramer contains one PKD1 chain and three PKD2 chains. Isoform 1 interacts with PKD1 while isoform 3 does not. Interacts with PKD1L1; probably forms a Ca(2+) channel. Interacts with CD2AP. Interacts with HAX1. Interacts with NEK8. Part of a complex containing AKAP5, ADCY5, ADCY6 and PDE4C. Interacts (via C-terminus) with TRPV4 (via C-terminus). Interacts (via C-terminal acidic region) with PACS1 and PACS2; these interactions retain the protein in the endoplasmic reticulum and prevent trafficking to the cell membrane. Interacts with TMEM33. Form a heterotetramer with TRPC1 with a 2:2 stoichiometry; has distinct channel properties separate from PKD2 or TRPC1 homomers alone. Interacts with TMEM120A; TMEM120A inhibits PKD2 channel activity through the physical association of PKD2 with TMEM120A. Interacts (via N-terminus) with RYR2; regulates RYR2 channel activity. Post-translationally, N-glycosylated. The four subunits in a tetramer probably differ in the extent of glycosylation; simultaneous glycosylation of all experimentally validated sites would probably create steric hindrance. Phosphorylated. Phosphorylation is important for protein function; a mutant that lacks the N-terminal phosphorylation sites cannot complement a zebrafish pkd2-deficient mutant. PKD-mediated phosphorylation at the C-terminus regulates its function in the release of Ca(2+) stores from the endoplasmic reticulum. Phosphorylation at Ser-814 regulates PKD2 trafficking. Phosphorylation at Ser-76 is required for PKD2 trafficking to or retention at the lateral plasma membrane. Phosphorylation at Ser-803, Ser-814 and Ser-831 regulates PKD2 channel activity. In terms of processing, sumoylated by SUMO1; sumoylation regulates PKD2 membrane recycling and is necessary for intravascular pressure-induced arterial contractility. Expressed in mesenchymally derived structures in the developing embryo at day 12.5. In adult, mostly expressed in kidney.

The protein resides in the cell projection. Its subcellular location is the cilium membrane. It localises to the endoplasmic reticulum membrane. The protein localises to the cell membrane. It is found in the basolateral cell membrane. The protein resides in the cytoplasmic vesicle membrane. Its subcellular location is the golgi apparatus. It localises to the vesicle. The protein localises to the secreted. It is found in the extracellular exosome. It catalyses the reaction K(+)(in) = K(+)(out). It carries out the reaction Na(+)(in) = Na(+)(out). The enzyme catalyses Ca(2+)(in) = Ca(2+)(out). Its activity is regulated as follows. Channel activity is regulated by phosphorylation. Channel activity is regulated by intracellular Ca(2+). At the endoplasmic reticulum membrane (ER), TMEM33 enhances its channel activity. TMEM120A inhibits the channel activity of PKD2, and mediates mechanosensitivity of the PKD2-TMEM120A channel complex. PKD1/PKD2 complex on the plasma membrane is activated by PKD1 N-terminus. Its function is as follows. Forms a nonselective cation channel. Can function as a homotetrameric ion channel or can form heteromer with PKD1. Displays distinct function depending on its subcellular localization and regulation by its binding partners. Functions as a cation channel, with a preference for monovalent cations over divalent cations that allows K(+), Na(+) and Ca(2+) influx, with low selectivity for Ca(2+). Involved in fluid-flow mechanosensation in the primary cilium in renal epithelium. In the endoplasmic reticulum, likely functions as a K(+) channel to facilitate Ca(2+) release. The heterotetrameric PKD1/PKD2 channel has higher Ca(2+) permeability than homomeric PKD2 channel and acts as a primarily Ca(2+)-permeable channel. Interacts with and acts as a regulator of a number of other channels, such as TRPV4, TRPC1, IP3R, RYR2, ultimately further affecting intracellular signaling, to modulate intracellular Ca(2+) signaling. Together with TRPV4, forms mechano- and thermosensitive channels in cilium. In cardiomyocytes, PKD2 modulates Ca(2+) release from stimulated RYR2 receptors through direct association. Also involved in left-right axis specification via its role in sensing nodal flow; forms a complex with PKD1L1 in cilia to facilitate flow detection in left-right patterning. Acts as a regulator of cilium length together with PKD1. Mediates systemic blood pressure and contributes to the myogenic response in cerebral arteries though vasoconstriction. This Bos taurus (Bovine) protein is Polycystin-2.